Reading from the N-terminus, the 151-residue chain is Acidic phospholipase A2 5 (151 aa).

Residues 1 to 27 form the signal peptide; it reads MYPAHLLVLLAVCVSLLGAASIPARPL. 7 disulfides stabilise this stretch: Cys38/Cys104, Cys54/Cys151, Cys56/Cys72, Cys71/Cys132, Cys78/Cys125, Cys88/Cys118, and Cys111/Cys123. Ca(2+) contacts are provided by Tyr55, Gly57, and Gly59. The active site involves His75. Ca(2+) is bound at residue Asp76. Asp126 is a catalytic residue.

Belongs to the phospholipase A2 family. Group I subfamily. D49 sub-subfamily. The cofactor is Ca(2+). As to expression, expressed by the venom gland.

The protein localises to the secreted. It catalyses the reaction a 1,2-diacyl-sn-glycero-3-phosphocholine + H2O = a 1-acyl-sn-glycero-3-phosphocholine + a fatty acid + H(+). PLA2 catalyzes the calcium-dependent hydrolysis of the 2-acyl groups in 3-sn-phosphoglycerides. In Tropidechis carinatus (Australian rough-scaled snake), this protein is Acidic phospholipase A2 5.